Reading from the N-terminus, the 283-residue chain is ATP synthase gamma chain (283 aa).

It belongs to the ATPase gamma chain family. In terms of assembly, F-type ATPases have 2 components, CF(1) - the catalytic core - and CF(0) - the membrane proton channel. CF(1) has five subunits: alpha(3), beta(3), gamma(1), delta(1), epsilon(1). CF(0) has three main subunits: a, b and c.

It is found in the cell membrane. Functionally, produces ATP from ADP in the presence of a proton gradient across the membrane. The gamma chain is believed to be important in regulating ATPase activity and the flow of protons through the CF(0) complex. In Desulforamulus reducens (strain ATCC BAA-1160 / DSM 100696 / MI-1) (Desulfotomaculum reducens), this protein is ATP synthase gamma chain.